The chain runs to 82 residues: ATP synthase subunit c (82 aa).

2 consecutive transmembrane segments (helical) span residues 7-27 (AASV…PGIG) and 57-77 (LAFM…LLFA).

Belongs to the ATPase C chain family. F-type ATPases have 2 components, F(1) - the catalytic core - and F(0) - the membrane proton channel. F(1) has five subunits: alpha(3), beta(3), gamma(1), delta(1), epsilon(1). F(0) has four main subunits: a(1), b(1), b'(1) and c(10-14). The alpha and beta chains form an alternating ring which encloses part of the gamma chain. F(1) is attached to F(0) by a central stalk formed by the gamma and epsilon chains, while a peripheral stalk is formed by the delta, b and b' chains.

Its subcellular location is the cellular thylakoid membrane. In terms of biological role, f(1)F(0) ATP synthase produces ATP from ADP in the presence of a proton or sodium gradient. F-type ATPases consist of two structural domains, F(1) containing the extramembraneous catalytic core and F(0) containing the membrane proton channel, linked together by a central stalk and a peripheral stalk. During catalysis, ATP synthesis in the catalytic domain of F(1) is coupled via a rotary mechanism of the central stalk subunits to proton translocation. Key component of the F(0) channel; it plays a direct role in translocation across the membrane. A homomeric c-ring of between 10-14 subunits forms the central stalk rotor element with the F(1) delta and epsilon subunits. The polypeptide is ATP synthase subunit c (Synechococcus sp. (strain WH7803)).